We begin with the raw amino-acid sequence, 274 residues long: Thiamine kinase (274 aa).

This sequence belongs to the thiamine kinase family.

It carries out the reaction thiamine + ATP = thiamine phosphate + ADP + H(+). Its pathway is cofactor biosynthesis; thiamine diphosphate biosynthesis; thiamine phosphate from thiamine: step 1/1. In terms of biological role, catalyzes the ATP-dependent phosphorylation of thiamine to thiamine phosphate. Is involved in thiamine salvage. This Escherichia coli O6:K15:H31 (strain 536 / UPEC) protein is Thiamine kinase.